The following is a 216-amino-acid chain: Large ribosomal subunit protein uL3 (216 aa).

Q157 carries the post-translational modification N5-methylglutamine.

Belongs to the universal ribosomal protein uL3 family. In terms of assembly, part of the 50S ribosomal subunit. Forms a cluster with proteins L14 and L19. Methylated by PrmB.

One of the primary rRNA binding proteins, it binds directly near the 3'-end of the 23S rRNA, where it nucleates assembly of the 50S subunit. The chain is Large ribosomal subunit protein uL3 from Xanthomonas axonopodis pv. citri (strain 306).